A 1346-amino-acid chain; its full sequence is Adhesion G protein-coupled receptor F5 (1346 aa).

A signal peptide spans 1–21 (MKSPRRTTLCLMFIVIYSSKA). Residues 22–1006 (ALNWNYESTI…MSPDSPDPSS (985 aa)) lie on the Extracellular side of the membrane. Asn73, Asn94, Asn106, Asn188, Asn256, Asn272, Asn301, Asn315, Asn328, Asn398, Asn472, Asn487, Asn505, Asn540, Asn627, Asn649, Asn666, Asn820, Asn931, Asn963, and Asn982 each carry an N-linked (GlcNAc...) asparagine glycan. The SEA domain maps to 166–273 (LQEDVTLNMR…NSFQAVTINE (108 aa)). Ig-like domains lie at 267–368 (QAVT…IDVM), 369–466 (PIQI…IKVT), and 471–561 (ANLT…KDVI). Disulfide bonds link Cys293–Cys350 and Cys391–Cys449. A disulfide bridge links Cys492 with Cys545. The region spanning 842-1003 (PPLSFSQTNV…SILMSPDSPD (162 aa)) is the GAIN-B domain. 2 disulfide bridges follow: Cys954–Cys985 and Cys973–Cys987. The interval 954–1003 (CVFWNFRLANNTGGWDSSGCYVEEGDGDNVTCICDHLTSFSILMSPDSPD) is GPS. The segment at 991 to 1006 (TSFSILMSPDSPDPSS) is tethered agonist. Residues 1007–1027 (LLGILLDIISYVGVGFSILSL) traverse the membrane as a helical segment. The Cytoplasmic portion of the chain corresponds to 1028–1053 (AACLVVEAVVWKSVTKNRTSYMRHTC). The chain crosses the membrane as a helical span at residues 1054-1074 (IVNIAASLLVANTWFIVVAAI). Residues 1075–1090 (QDNRYILCKTACVAAT) are Extracellular-facing. The helical transmembrane segment at 1091 to 1111 (FFIHFFYLSVFFWMLTLGLML) threads the bilayer. The Cytoplasmic segment spans residues 1112–1128 (FYRLVFILHETSRSTQK). Residues 1129–1149 (AIAFCLGYGCPLAISVITLGA) form a helical membrane-spanning segment. Residues 1150 to 1173 (TQPREVYTRKNVCWLNWEDTKALL) lie on the Extracellular side of the membrane. The chain crosses the membrane as a helical span at residues 1174 to 1194 (AFAIPALIIVVVNITITIVVI). The Cytoplasmic segment spans residues 1195–1220 (TKILRPSIGDKPCKQEKSSLFQISKS). Residues 1221 to 1241 (IGVLTPLLGLTWGFGLTTVFP) traverse the membrane as a helical segment. Over 1242–1244 (GTN) the chain is Extracellular. The chain crosses the membrane as a helical span at residues 1245–1265 (LVFHIIFAILNVFQGLFILLF). Residues 1266 to 1346 (GCLWDLKVQE…NSSSASSLLN (81 aa)) are Cytoplasmic-facing. Thr1300 carries the post-translational modification Phosphothreonine. The residue at position 1307 (Ser1307) is a Phosphoserine. Residues 1327 to 1346 (TPEATSSSLENSSSASSLLN) form a disordered region. Residues 1329-1346 (EATSSSLENSSSASSLLN) show a composition bias toward low complexity.

Belongs to the G-protein coupled receptor 2 family. Adhesion G-protein coupled receptor (ADGR) subfamily. As to quaternary structure, homodimer; disulfide-linked. Heterodimer of 2 chains generated by proteolytic processing; the large extracellular N-terminal fragment and the membrane-bound C-terminal fragment predominantly remain associated and non-covalently linked. Fragment generates by the processing enzyme furin remains attached to the extracellular N-terminal fragment. Interacts (via N-terminal extracellular domain) with SFTPD. In terms of processing, highly glycosylated. Proteolytically cleaved at multiple sites: one in the GPS region of the GAIN-B domain (S1 site) and the other in the SEA domain (S2 site). The proteolytic cleavage at S1 site generates an extracellular subunit and a seven-transmembrane subunit. The proteolytic cleavage at S2 site generates a fragment that undergoes proteolytic cleavage by the processing enzyme furin. In terms of tissue distribution, expressed in lung endothelial cells and in alveolar type II (ATII) cells (at protein level). Expressed high levels in subcutaneous adipose tissue in lean individuals and at lower levels in visceral fat. Expression levels in subcutaneous adipose tissue drastically drop in obese individuals.

Its subcellular location is the cell membrane. As an adhesion G protein-coupled receptor (aGPCR) exhibits a large N-terminal extracellular domain containing highly conserved GPCR autoproteolysis-inducing (GAIN) domain. During synthesis, intracellular autoproteolytic processing of nascent chain within the GAIN domain generates a mature protein, consisting of an N-terminal fragment that is non-covalently linked to the C-terminal fragment. The mature protein is routed to the plasma membrane where the N- and C-terminal fragments remain associated, forming the holoreceptor. Dissociation of the aGPCR fragments stimulates G protein signaling through the action of the tethered-peptide agonist stalk that is occluded within the GAIN domain in the holoreceptor form. This dissociation might be induced by ligand binding, such as that of sFNDC4. Functionally, adhesion G protein-coupled receptor. In alveolar type II (ATII or AT2) cells, required for normal lung surfactant homeostasis. Modulation of both surfactant secretion and uptake by ATII cells is mediated by the downstream activation of GNAQ/GNA11 proteins and may be a consequence of increased cortical F-actin assembly induced by ADGRF5 activation. In the kidney, may play a role in the regulation of acid excretion into the primary urine, possibly by regulating the surface expression of V-ATPase proton pump. As a receptor for soluble FNDC4 (sFNDC4), required for proper systemic glucose tolerance, specifically sensitizing white adipose tissue to insulin. Also plays a role in sFNDC4-induced decrease of local inflammation in white adipose tissue. In Homo sapiens (Human), this protein is Adhesion G protein-coupled receptor F5.